The chain runs to 360 residues: Phospho-N-acetylmuramoyl-pentapeptide-transferase (360 aa).

A run of 10 helical transmembrane segments spans residues 21-41, 73-93, 94-114, 132-152, 168-188, 199-219, 239-259, 263-283, 288-308, and 338-358; these read YITV…LWIG, TMGG…WANL, ANSY…IGFV, WKYF…YWLG, IMPQ…VGTG, GLAI…AWAT, VVVF…FNTY, VFMG…VAIL, FLLV…ILQV, and VIIR…VTLK.

It belongs to the glycosyltransferase 4 family. MraY subfamily. Mg(2+) is required as a cofactor.

The protein localises to the cell inner membrane. It catalyses the reaction UDP-N-acetyl-alpha-D-muramoyl-L-alanyl-gamma-D-glutamyl-meso-2,6-diaminopimeloyl-D-alanyl-D-alanine + di-trans,octa-cis-undecaprenyl phosphate = di-trans,octa-cis-undecaprenyl diphospho-N-acetyl-alpha-D-muramoyl-L-alanyl-D-glutamyl-meso-2,6-diaminopimeloyl-D-alanyl-D-alanine + UMP. It functions in the pathway cell wall biogenesis; peptidoglycan biosynthesis. Its function is as follows. Catalyzes the initial step of the lipid cycle reactions in the biosynthesis of the cell wall peptidoglycan: transfers peptidoglycan precursor phospho-MurNAc-pentapeptide from UDP-MurNAc-pentapeptide onto the lipid carrier undecaprenyl phosphate, yielding undecaprenyl-pyrophosphoryl-MurNAc-pentapeptide, known as lipid I. The chain is Phospho-N-acetylmuramoyl-pentapeptide-transferase from Haemophilus influenzae (strain 86-028NP).